Here is a 189-residue protein sequence, read N- to C-terminus: Peptidyl-tRNA hydrolase (189 aa).

Phe-15 contacts tRNA. His-20 functions as the Proton acceptor in the catalytic mechanism. 3 residues coordinate tRNA: Tyr-65, Asn-67, and Asn-113.

This sequence belongs to the PTH family. Monomer.

The protein resides in the cytoplasm. It carries out the reaction an N-acyl-L-alpha-aminoacyl-tRNA + H2O = an N-acyl-L-amino acid + a tRNA + H(+). Functionally, hydrolyzes ribosome-free peptidyl-tRNAs (with 1 or more amino acids incorporated), which drop off the ribosome during protein synthesis, or as a result of ribosome stalling. In terms of biological role, catalyzes the release of premature peptidyl moieties from peptidyl-tRNA molecules trapped in stalled 50S ribosomal subunits, and thus maintains levels of free tRNAs and 50S ribosomes. This chain is Peptidyl-tRNA hydrolase, found in Phytoplasma australiense.